A 471-amino-acid chain; its full sequence is 5-hydroxytryptamine receptor 2A (471 aa).

Residues 1 to 80 (MEILCEDNIS…LQEKNWSALL (80 aa)) are Extracellular-facing. N-linked (GlcNAc...) asparagine glycosylation is found at asparagine 8, asparagine 38, asparagine 44, asparagine 51, and asparagine 54. The helical transmembrane segment at 81–97 (TTVVIILTIAGNILVIM) threads the bilayer. Over 98–111 (AVSLEKKLQNATNY) the chain is Cytoplasmic. A helical membrane pass occupies residues 112 to 137 (FLMSLAIADMLLGFLVMPVSMLTILY). Topologically, residues 138 to 146 (GYRWPLPSK) are extracellular. A helical transmembrane segment spans residues 147–171 (LCAIWIYLDVLFSTASIMHLCAISL). A disulfide bridge links cysteine 148 with cysteine 227. Residue aspartate 155 coordinates serotonin. The DRY motif; important for ligand-induced conformation changes signature appears at 172 to 174 (DRY). Residues 172–191 (DRYVAIQNPIHHSRFNSRTK) are Cytoplasmic-facing. The chain crosses the membrane as a helical span at residues 192–215 (AFLKIIAVWTISVGISMPIPVFGL). Residues 216–232 (QDDSKVFKEGSCLLADD) are Extracellular-facing. A helical transmembrane segment spans residues 233–258 (NFVLIGSFVAFFIPLTIMVITYFLTI). The Cytoplasmic segment spans residues 259–322 (KSLQKEATLC…QSISNEQKAC (64 aa)). A Phosphoserine modification is found at serine 280. A helical membrane pass occupies residues 323–348 (KVLGIVFFLFVVMWCPFFITNIMAVI). Asparagine 343 contacts serotonin. Cysteine 349 and cysteine 353 form a disulfide bridge. The Extracellular portion of the chain corresponds to 349–356 (CKESCNEN). A helical membrane pass occupies residues 357-382 (VIGALLNVFVWIGYLSSAVNPLVYTL). Residues 376–380 (NPLVY) carry the NPxxY motif; important for ligand-induced conformation changes and signaling motif. Over 383–471 (FNKTYRSAFS…ETVNEKVSCV (89 aa)) the chain is Cytoplasmic. The PDZ-binding signature appears at 469 to 471 (SCV).

The protein belongs to the G-protein coupled receptor 1 family. Interacts (via C-terminus) with MPDZ and PATJ. May interact (via C-terminus) with MPP3, PRDX6, DLG4, DLG1, CASK, APBA1 and MAGI2. Interacts with GRM2 and DRD2; this may affect signaling. In terms of tissue distribution, detected in adult intestine, especially in mucosal epithelium, longitudinal and circular layers of muscularis externa and myenteric plexuses. Highly expressed in Paneth cells, and detected at lower levels in enterocytes (at protein level). Detected in brain cortex.

The protein resides in the cell membrane. It is found in the cell projection. The protein localises to the axon. It localises to the cytoplasmic vesicle. Its subcellular location is the membrane. The protein resides in the caveola. It is found in the dendrite. The protein localises to the presynapse. G-protein coupled receptor activity is regulated by lipids: oleamide increases HTR2A-mediated activity. Its function is as follows. G-protein coupled receptor for 5-hydroxytryptamine (serotonin). Also functions as a receptor for various drugs and psychoactive substances, including mescaline, psilocybin, 1-(2,5-dimethoxy-4-iodophenyl)-2-aminopropane (DOI) and lysergic acid diethylamide (LSD). Ligand binding causes a conformation change that triggers signaling via guanine nucleotide-binding proteins (G proteins) and modulates the activity of downstream effectors. HTR2A is coupled to G(q)/G(11) G alpha proteins and activates phospholipase C-beta, releasing diacylglycerol (DAG) and inositol 1,4,5-trisphosphate (IP3) second messengers that modulate the activity of phosphatidylinositol 3-kinase and promote the release of Ca(2+) ions from intracellular stores, respectively. Beta-arrestin family members inhibit signaling via G proteins and mediate activation of alternative signaling pathways. Affects neural activity, perception, cognition and mood. Plays a role in the regulation of behavior, including responses to anxiogenic situations and psychoactive substances. Plays a role in intestinal smooth muscle contraction, and may play a role in arterial vasoconstriction. The protein is 5-hydroxytryptamine receptor 2A (Htr2a) of Rattus norvegicus (Rat).